The chain runs to 768 residues: Solabiose phosphorylase (768 aa).

Catalysis depends on Asp456, which acts as the Proton donor.

This sequence belongs to the glycosyl hydrolase 94 family.

It carries out the reaction solabiose + phosphate = D-galactose + alpha-D-glucose 1-phosphate. In terms of biological role, catalyzes the reversible phosphorolysis of solabiose. Catalyzes the phosphorolysis and synthesis of solabiose through a sequential bi-bi mechanism involving the formation of a ternary complex. Is probably involved in the metabolism of solabiose released from solabiose-containing compounds. This Paenibacillus borealis protein is Solabiose phosphorylase.